The following is a 218-amino-acid chain: Insulin-induced gene 2 protein (218 aa).

At 1-21 (MGDRENVSYGSRPILAQKMNL) the chain is on the cytoplasmic side. A helical transmembrane segment spans residues 22–44 (LLRGFLLFLIGVFLALVLNLLQV). Over 45 to 63 (QRNVTLFPPDVLSSLFSSA) the chain is Lumenal. Residues 64-81 (WWVPLCCGTAAAAIGLLY) traverse the membrane as a helical segment. The Cytoplasmic portion of the chain corresponds to 82-96 (PCIDRHLGEPHKFKR). Residues 97–119 (EWSSVMRCVAVFVGINHASAKVD) form a helical membrane-spanning segment. At 120-122 (FAN) the chain is on the lumenal side. The helical transmembrane segment at 123 to 141 (NMQLSLTLAALSIGLWWTF) threads the bilayer. At 142-146 (DRSRS) the chain is on the cytoplasmic side. Residues 147–168 (GLGLGIGISFFATLVSQLLVYN) traverse the membrane as a helical segment. Over 169-182 (GVYEYTAPDFLYVR) the chain is Lumenal. Residues 183 to 200 (SWLPCIFFAGGITMGNIG) traverse the membrane as a helical segment. Topologically, residues 201 to 218 (RQLEMYERKALVEKSHRD) are cytoplasmic. The short motif at 212–218 (VEKSHRD) is the KxHxx element.

This sequence belongs to the INSIG family. As to quaternary structure, interacts with scap; interaction is direct and only takes place in the presence of sterols; it prevents interaction between scap and the coat protein complex II (COPII). Associates with the SCAP-SREBP complex; association is mediated via its interaction with scap and only takes place in the presence of sterols.

It localises to the endoplasmic reticulum membrane. In terms of biological role, oxysterol-binding protein that mediates feedback control of cholesterol synthesis by controlling both endoplasmic reticulum to Golgi transport of scap and degradation of hmgcr. Acts as a negative regulator of cholesterol biosynthesis by mediating the retention of the SCAP-SREBP complex in the endoplasmic reticulum, thereby blocking the processing of sterol regulatory element-binding proteins (SREBPs). Binds oxysterol, including 22-hydroxycholesterol, 24-hydroxycholesterol, 25-hydroxycholesterol and 27-hydroxycholesterol, regulating interaction with scap and retention of the SCAP-SREBP complex in the endoplasmic reticulum. In presence of oxysterol, interacts with scap, retaining the SCAP-SREBP complex in the endoplasmic reticulum, thereby preventing scap from escorting SREBPs to the Golgi. Sterol deprivation reduce oxysterol-binding, disrupting the interaction between insig2 and scap, thereby promoting Golgi transport of the SCAP-SREBP complex, followed by processing and nuclear translocation of SREBPs. Also regulates cholesterol synthesis by regulating degradation of hmgcr. In Xenopus laevis (African clawed frog), this protein is Insulin-induced gene 2 protein.